We begin with the raw amino-acid sequence, 89 residues long: Large ribosomal subunit protein uL23c (89 aa).

This sequence belongs to the universal ribosomal protein uL23 family. In terms of assembly, part of the 50S ribosomal subunit.

The protein localises to the plastid. The protein resides in the chloroplast. Its function is as follows. Binds to 23S rRNA. This is Large ribosomal subunit protein uL23c (rpl23) from Staurastrum punctulatum (Green alga).